Consider the following 318-residue polypeptide: Replication factor C small subunit (318 aa).

43–50 (GSVGTGKT) contacts ATP.

This sequence belongs to the activator 1 small subunits family. RfcS subfamily. In terms of assembly, heteromultimer composed of small subunits (RfcS) and large subunits (RfcL).

Functionally, part of the RFC clamp loader complex which loads the PCNA sliding clamp onto DNA. This chain is Replication factor C small subunit, found in Thermoplasma volcanium (strain ATCC 51530 / DSM 4299 / JCM 9571 / NBRC 15438 / GSS1).